A 127-amino-acid polypeptide reads, in one-letter code: Cyclin-dependent kinase 2-associated protein 2 (127 aa).

Residues 1 to 49 (MSYKPIAPAPSSTPGSSTPGPGTPVPTAGSVPSPSGSVPGAAGPFRPLF) are disordered. The span at 9 to 44 (APSSTPGSSTPGPGTPVPTAGSVPSPSGSVPGAAGP) shows a compositional bias: low complexity. The tract at residues 65-107 (PPGAQGSQSTYTDLLSVIEEMGKEIRPTYAGSKSAMERLKRGI) is interaction with CDK2.

Belongs to the CDK2AP family. As to quaternary structure, component of the nucleosome remodeling and deacetylase (NuRD) repressor complex, composed of core proteins MTA1, MTA2, MTA3, RBBP4, RBBP7, HDAC1, HDAC2, MBD2, MBD3, and peripherally associated proteins CDK2AP1, CDK2AP2, GATAD2A, GATAD2B, CHD3, CHD4 and CHD5. The exact stoichiometry of the NuRD complex is unknown, and some subunits such as MBD2 and MBD3, GATAD2A and GATAD2B, and CHD3, CHD4 and CHD5 define mutually exclusive NuRD complexes. Interacts with CDK2AP1. Interacts with CDK2. Interacts with MAPK1. Phosphorylated by MAPK1 and CDK2.

It localises to the cytoplasm. The protein localises to the nucleus. In terms of biological role, acts as a component of the histone deacetylase NuRD complex which participates in the remodeling of chromatin. Inhibits cell cycle G1/S phase transition by repressing CDK2 expression and activation; represses CDK2 activation by inhibiting its interaction with cyclin E and A. Plays a role in regulating the self-renewal of embryonic stem cells (ESCs) and in maintaining cell survival during terminal differentiation of ESCs. Regulates microtubule organization of metaphase II oocytes. This is Cyclin-dependent kinase 2-associated protein 2 (CDK2AP2) from Bos taurus (Bovine).